Here is a 238-residue protein sequence, read N- to C-terminus: Photosynthetic NDH subunit of lumenal location 1, chloroplastic (238 aa).

It belongs to the PsbP family. In terms of assembly, part of the chloroplast NDH complex, composed of a mixture of chloroplast and nucleus encoded subunits. Component of the NDH lumenal subcomplex, at least composed of PnsL1, PnsL2, PnsL3, PnsL4 and PnsL5.

It is found in the plastid. It localises to the chloroplast thylakoid membrane. Functionally, NDH shuttles electrons from NAD(P)H:plastoquinone, via FMN and iron-sulfur (Fe-S) centers, to quinones in the photosynthetic chain and possibly in a chloroplast respiratory chain. The immediate electron acceptor for the enzyme in this species is believed to be plastoquinone. Couples the redox reaction to proton translocation, and thus conserves the redox energy in a proton gradient. Required for accumulation of the chloroplast NAD(P)H dehydrogenase (NDH) complex. The protein is Photosynthetic NDH subunit of lumenal location 1, chloroplastic of Arabidopsis thaliana (Mouse-ear cress).